A 917-amino-acid chain; its full sequence is Translation initiation factor IF-2 (917 aa).

Disordered stretches follow at residues 1-84 (MSDG…GRAG) and 150-318 (KESE…DRER). Residues 10–27 (DGNNTPSQGGEQTRSSRL) show a composition bias toward polar residues. 3 stretches are compositionally biased toward low complexity: residues 69–84 (AAGPGAGAAARGGRAG), 154–177 (QQAAREQAAAEAAARAAEQAAAEA), and 227–236 (SRPAAAAPAR). Pro residues predominate over residues 265-274 (GAPPAPPRRP). Residues 282-305 (GGSDRRSGRIDVRAAIEGDDDKTR) show a composition bias toward basic and acidic residues. Residues 416-586 (PRAPVVTVMG…LLQSEMLDLK (171 aa)) enclose the tr-type G domain. Residues 425 to 432 (GHVDHGKT) are G1. 425–432 (GHVDHGKT) is a GTP binding site. The G2 stretch occupies residues 450–454 (GITQH). The segment at 472–475 (DTPG) is G3. Residues 472–476 (DTPGH) and 526–529 (NKID) contribute to the GTP site. The tract at residues 526–529 (NKID) is G4. Residues 562-564 (SAL) are G5.

The protein belongs to the TRAFAC class translation factor GTPase superfamily. Classic translation factor GTPase family. IF-2 subfamily.

It is found in the cytoplasm. In terms of biological role, one of the essential components for the initiation of protein synthesis. Protects formylmethionyl-tRNA from spontaneous hydrolysis and promotes its binding to the 30S ribosomal subunits. Also involved in the hydrolysis of GTP during the formation of the 70S ribosomal complex. In Gluconobacter oxydans (strain 621H) (Gluconobacter suboxydans), this protein is Translation initiation factor IF-2.